We begin with the raw amino-acid sequence, 170 residues long: Fluoride-specific ion channel FluC 2 (170 aa).

4 helical membrane passes run 8-28 (ALVF…TVWI), 55-75 (IALL…VGMI), 84-104 (TFWG…AAAV), and 114-134 (ILIG…AAAM). Na(+) contacts are provided by G92 and T95.

The protein belongs to the fluoride channel Fluc/FEX (TC 1.A.43) family.

The protein resides in the cell membrane. It carries out the reaction fluoride(in) = fluoride(out). Its activity is regulated as follows. Na(+) is not transported, but it plays an essential structural role and its presence is essential for fluoride channel function. Functionally, fluoride-specific ion channel. Important for reducing fluoride concentration in the cell, thus reducing its toxicity. This chain is Fluoride-specific ion channel FluC 2, found in Corynebacterium jeikeium (strain K411).